A 303-amino-acid chain; its full sequence is Magainins (303 aa).

The N-terminal stretch at 1 to 18 (MFKGLFICSLIAVICANA) is a signal peptide. 13 consecutive propeptides follow at residues 19–26 (LPQPEASA), 33–36 (REVR), 62–72 (DAEAVGPEAFA), 79–82 (REVR), 108–118 (DAEAVGPEAFA), 125–128 (REVR), 154–164 (DAEAVGPEAFA), 171–174 (REVR), 200–210 (DAEAVGPEAFA), 217–220 (REVR), 246–256 (DAEAVGPEAFA), 263–266 (REVR), and 292–303 (DAEAVDDRRWVE).

It belongs to the gastrin/cholecystokinin family. Magainin subfamily. In terms of tissue distribution, synthesized in the stomach and stored in a novel granular multinucleated cell in the gastric mucosa. It is stored as active, processed peptides in large granules within the granular gland secretions of the skin.

It localises to the secreted. Functionally, antimicrobial peptides that inhibit the growth of numerous species of bacteria and fungi and induce osmotic lysis of protozoa. Rapidly inactivates channel catfish herpesvirus (ED(50)=48 uM) over a wide temperature range. Magainins are membrane lytic agents. The sequence is that of Magainins (magainins) from Xenopus laevis (African clawed frog).